The chain runs to 1101 residues: Protein unc-13 homolog (1101 aa).

The MHD1 domain occupies 663 to 804; that stretch reads VSVFPAADSL…ASKDDLVPPV (142 aa). The 111-residue stretch at 941–1051 folds into the MHD2 domain; that stretch reads QSRLEGLIEA…YETRELIDDL (111 aa).

The protein belongs to the unc-13 family. Expressed in roots, cotyledons, leaves, stems and flowers. Expressed in guard cells and mesophyll cells of leaves.

The protein localises to the cytoplasm. It localises to the cell membrane. In terms of biological role, controls the tethering of the proton ATPase AHA1 to the plasma membrane. Is essential for stomatal opening in response to low concentration of carbon dioxide and light. The protein is Protein unc-13 homolog of Arabidopsis thaliana (Mouse-ear cress).